A 327-amino-acid polypeptide reads, in one-letter code: Interleukin-12 subunit beta (327 aa).

Residues 1-22 form the signal peptide; the sequence is MHPQQLVVSWFSLVLLTSPIVA. Residues 23–106 enclose the Ig-like C2-type domain; the sequence is IWELEKNVYV…LSRSLLLLHK (84 aa). Cysteines 50 and 90 form a disulfide. N-linked (GlcNAc...) asparagine glycosylation occurs at asparagine 223. In terms of domain architecture, Fibronectin type-III spans 238-327; sequence PPKNLQLRPL…WSEWASVSCS (90 aa).

It belongs to the IL-12B family. As to quaternary structure, heterodimer with IL12A; disulfide-linked. The heterodimer is known as interleukin IL-12. Heterodimer with IL23A; disulfide-linked. The heterodimer is known as interleukin IL-23. Also secreted as a monomer. Interacts with NBR1; this interaction promotes IL-12 secretion.

The protein localises to the secreted. Functionally, cytokine that can act as a growth factor for activated T and NK cells, enhance the lytic activity of NK/lymphokine-activated killer cells, and stimulate the production of IFN-gamma by resting PBMC. Its function is as follows. Associates with IL23A to form the IL-23 interleukin, a heterodimeric cytokine which functions in innate and adaptive immunity. IL-23 may constitute with IL-17 an acute response to infection in peripheral tissues. IL-23 binds to a heterodimeric receptor complex composed of IL12RB1 and IL23R, activates the Jak-Stat signaling cascade, stimulates memory rather than naive T-cells and promotes production of pro-inflammatory cytokines. IL-23 induces autoimmune inflammation and thus may be responsible for autoimmune inflammatory diseases and may be important for tumorigenesis. The polypeptide is Interleukin-12 subunit beta (IL12B) (Cervus elaphus (Red deer)).